Consider the following 135-residue polypeptide: Small ribosomal subunit protein bS6 (135 aa).

Residues 99–120 (QHSSLGRSTAPANPMASNTPRT) are compositionally biased toward polar residues. The interval 99 to 135 (QHSSLGRSTAPANPMASNTPRTEGQEQAKTEPQTAPA) is disordered.

Belongs to the bacterial ribosomal protein bS6 family.

Binds together with bS18 to 16S ribosomal RNA. The sequence is that of Small ribosomal subunit protein bS6 from Synechococcus sp. (strain RCC307).